The following is a 136-amino-acid chain: Small ribosomal subunit protein uS19 (136 aa).

Belongs to the universal ribosomal protein uS19 family.

Functionally, protein S19 forms a complex with S13 that binds strongly to the 16S ribosomal RNA. The polypeptide is Small ribosomal subunit protein uS19 (Methanosarcina mazei (strain ATCC BAA-159 / DSM 3647 / Goe1 / Go1 / JCM 11833 / OCM 88) (Methanosarcina frisia)).